The primary structure comprises 505 residues: RNA-splicing ligase RtcB homolog (505 aa).

Mn(2+) is bound by residues Asp-119, Cys-122, His-227, and His-259. 226 to 230 contacts GMP; that stretch reads NHYAE. The residue at position 300 (Ser-300) is a Phosphoserine. His-353 contacts Mn(2+). Residues 353–354, 402–405, Ser-409, and 428–431 each bind GMP; these read HN, GGTM, and HGAG. Residue His-428 is the GMP-histidine intermediate of the active site. Lys-496 participates in a covalent cross-link: Glycyl lysine isopeptide (Lys-Gly) (interchain with G-Cter in SUMO2). Lys-504 is a binding site for GMP.

Belongs to the RtcB family. As to quaternary structure, catalytic component of the tRNA-splicing ligase complex. The cofactor is Mn(2+).

Its subcellular location is the nucleus. The protein localises to the cytoplasm. The catalysed reaction is a 3'-end 3'-phospho-ribonucleotide-RNA + a 5'-end dephospho-ribonucleoside-RNA + GTP = a ribonucleotidyl-ribonucleotide-RNA + GMP + diphosphate. The enzyme catalyses a 3'-end 2',3'-cyclophospho-ribonucleotide-RNA + a 5'-end dephospho-ribonucleoside-RNA + GTP + H2O = a ribonucleotidyl-ribonucleotide-RNA + GMP + diphosphate + H(+). Catalytic subunit of the tRNA-splicing ligase complex that acts by directly joining spliced tRNA halves to mature-sized tRNAs by incorporating the precursor-derived splice junction phosphate into the mature tRNA as a canonical 3',5'-phosphodiester. May act as an RNA ligase with broad substrate specificity, and may function toward other RNAs. The polypeptide is RNA-splicing ligase RtcB homolog (Sus scrofa (Pig)).